A 199-amino-acid polypeptide reads, in one-letter code: 3-isopropylmalate dehydratase small subunit (199 aa).

This sequence belongs to the LeuD family. LeuD type 1 subfamily. Heterodimer of LeuC and LeuD.

The catalysed reaction is (2R,3S)-3-isopropylmalate = (2S)-2-isopropylmalate. The protein operates within amino-acid biosynthesis; L-leucine biosynthesis; L-leucine from 3-methyl-2-oxobutanoate: step 2/4. Its function is as follows. Catalyzes the isomerization between 2-isopropylmalate and 3-isopropylmalate, via the formation of 2-isopropylmaleate. The polypeptide is 3-isopropylmalate dehydratase small subunit (Pseudoalteromonas translucida (strain TAC 125)).